The sequence spans 320 residues: Very-long-chain 3-oxoacyl-CoA reductase (320 aa).

A helical membrane pass occupies residues 17–37 (FWYLGVVAAVWWGLRAAWCLL). 56–85 (GKWAVVTGATDGIGKAYAEELAKRGMNIVL) serves as a coordination point for NADP(+). Helical transmembrane passes span 189–209 (GVILNISSASGMYPVPLLTVY) and 283–303 (AIMGWISTSLVPVSTAISLGM). Ser196 provides a ligand contact to substrate. Tyr209 acts as the Proton acceptor in catalysis.

The protein belongs to the short-chain dehydrogenases/reductases (SDR) family. 17-beta-HSD 3 subfamily.

The protein resides in the endoplasmic reticulum membrane. The enzyme catalyses a very-long-chain (3R)-3-hydroxyacyl-CoA + NADP(+) = a very-long-chain 3-oxoacyl-CoA + NADPH + H(+). It carries out the reaction 17beta-estradiol + NAD(+) = estrone + NADH + H(+). It catalyses the reaction 17beta-estradiol + NADP(+) = estrone + NADPH + H(+). The catalysed reaction is 3-oxooctadecanoyl-CoA + NADPH + H(+) = (3R)-hydroxyoctadecanoyl-CoA + NADP(+). The enzyme catalyses (7Z,10Z,13Z,16Z)-3-oxodocosatetraenoyl-CoA + NADPH + H(+) = (3R)-hydroxy-(7Z,10Z,13Z,16Z)-docosatetraenoyl-CoA + NADP(+). It carries out the reaction 3-oxo-(7Z,10Z,13Z,16Z,19Z)-docosapentaenoyl-CoA + NADPH + H(+) = (3R)-hydroxy-(7Z,10Z,13Z,16Z,19Z)-docosapentaenoyl-CoA + NADP(+). It catalyses the reaction (8Z,11Z,14Z)-3-oxoeicosatrienoyl-CoA + NADPH + H(+) = (3R)-hydroxy-(8Z,11Z,14Z)-eicosatrienoyl-CoA + NADP(+). Its pathway is lipid metabolism; fatty acid biosynthesis. It participates in steroid biosynthesis; estrogen biosynthesis. Functionally, catalyzes the second of the four reactions of the long-chain fatty acids elongation cycle. This endoplasmic reticulum-bound enzymatic process, allows the addition of two carbons to the chain of long- and very long-chain fatty acids/VLCFAs per cycle. This enzyme has a 3-ketoacyl-CoA reductase activity, reducing 3-ketoacyl-CoA to 3-hydroxyacyl-CoA, within each cycle of fatty acid elongation. Thereby, it may participate in the production of VLCFAs of different chain lengths that are involved in multiple biological processes as precursors of membrane lipids and lipid mediators. May also catalyze the transformation of estrone (E1) into estradiol (E2) and play a role in estrogen formation. This Xenopus tropicalis (Western clawed frog) protein is Very-long-chain 3-oxoacyl-CoA reductase (hsd17b12).